The chain runs to 269 residues: Phosphonates import ATP-binding protein PhnC 2 (269 aa).

The region spanning 2–246 (LRIDSLSKRY…VLNEIYGEED (245 aa)) is the ABC transporter domain. 35-42 (GPSGAGKS) contributes to the ATP binding site. Residues 246–269 (DWNASGPAQDSEENEAVSAGVATH) are disordered.

The protein belongs to the ABC transporter superfamily. Phosphonates importer (TC 3.A.1.9.1) family. As to quaternary structure, the complex is composed of two ATP-binding proteins (PhnC), two transmembrane proteins (PhnE) and a solute-binding protein (PhnD).

It is found in the cell inner membrane. The catalysed reaction is phosphonate(out) + ATP + H2O = phosphonate(in) + ADP + phosphate + H(+). Its function is as follows. Part of the ABC transporter complex PhnCDE involved in phosphonates import. Responsible for energy coupling to the transport system. The sequence is that of Phosphonates import ATP-binding protein PhnC 2 from Synechococcus sp. (strain JA-2-3B'a(2-13)) (Cyanobacteria bacterium Yellowstone B-Prime).